Here is a 541-residue protein sequence, read N- to C-terminus: uncharacterized protein (541 aa).

5 helical membrane-spanning segments follow: residues 4–23 (FVAN…LAIG), 30–47 (FSLG…FAAV), 57–79 (VYIL…AFFA), 91–113 (LAIT…IHLN), and 156–178 (LVAY…GLCA). RCK C-terminal domains follow at residues 187–271 (QEAH…VLGD) and 273–354 (LPGD…LFGD). 5 consecutive transmembrane segments (helical) span residues 362 to 384 (FNLF…EVPL), 389 to 411 (ALSL…VGRS), 424 to 446 (LALR…GASF), 456 to 478 (LTII…VVGY), and 516 to 538 (LGYT…VVLF).

It belongs to the AAE transporter (TC 2.A.81) family.

It localises to the cell membrane. This is an uncharacterized protein from Corynebacterium diphtheriae (strain ATCC 700971 / NCTC 13129 / Biotype gravis).